The chain runs to 346 residues: Elongation factor Ts (346 aa).

The involved in Mg(2+) ion dislocation from EF-Tu stretch occupies residues 80–83 (TDFV).

It belongs to the EF-Ts family.

The protein localises to the cytoplasm. In terms of biological role, associates with the EF-Tu.GDP complex and induces the exchange of GDP to GTP. It remains bound to the aminoacyl-tRNA.EF-Tu.GTP complex up to the GTP hydrolysis stage on the ribosome. The sequence is that of Elongation factor Ts from Streptococcus pyogenes serotype M3 (strain ATCC BAA-595 / MGAS315).